A 464-amino-acid chain; its full sequence is MTVKTRFAPSPTGYLHIGGVRTALFSWAFARHHKGEFLLRIEDTDLARSTAESVNIILDGMKWVGLNYDNADNVVYQTRRFDRYKEVIAELLEKGHAYYCYCSKEELEAMREKAEKEGTATYDRRWRPEAGKTLPEIPAGVQPVVRFKTPLDGVTKWADLVKGEISIPNEALDDLIIARADGTPTYNFCVVVDDYDMGVTHVIRGDDHVNNTPKQINILKAIGANLPEYGHLPMILNEQGKKISKRSGDTVAITDFGAMGILPEAMLNYLARLGWAHGDDEFFTMEQFIEWFDLKDVSPSPSRMDLKKLYWINGEHIKITTNEKLAEMVKPRLALRDIHETSKPALEDVLALVKDRAQDLNALADECLYFYKKQVPAEADVAKHWDDEASARMLRFAERLEGLEDWNTEAIHDLFKPFCDEEGIKMGKLGMPLRLAVCGTAKTPSVDAVLALIGKEEVLKRIRA.

The 'HIGH' region motif lies at 9-19 (PSPTGYLHIGG). A 'KMSKS' region motif is present at residues 242 to 246 (KISKR). Residue Lys245 coordinates ATP.

It belongs to the class-I aminoacyl-tRNA synthetase family. Glutamate--tRNA ligase type 1 subfamily. As to quaternary structure, monomer.

Its subcellular location is the cytoplasm. It carries out the reaction tRNA(Glu) + L-glutamate + ATP = L-glutamyl-tRNA(Glu) + AMP + diphosphate. In terms of biological role, catalyzes the attachment of glutamate to tRNA(Glu) in a two-step reaction: glutamate is first activated by ATP to form Glu-AMP and then transferred to the acceptor end of tRNA(Glu). The chain is Glutamate--tRNA ligase from Neisseria meningitidis serogroup C / serotype 2a (strain ATCC 700532 / DSM 15464 / FAM18).